The chain runs to 89 residues: Small ribosomal subunit protein uS17A (89 aa).

It belongs to the universal ribosomal protein uS17 family. Part of the 30S ribosomal subunit.

Functionally, one of the primary rRNA binding proteins, it binds specifically to the 5'-end of 16S ribosomal RNA. The protein is Small ribosomal subunit protein uS17A of Bacteroides thetaiotaomicron (strain ATCC 29148 / DSM 2079 / JCM 5827 / CCUG 10774 / NCTC 10582 / VPI-5482 / E50).